Here is a 162-residue protein sequence, read N- to C-terminus: Phosphopantetheine adenylyltransferase (162 aa).

Residue Thr-9 participates in substrate binding. Residues 9-10 (TF) and His-17 contribute to the ATP site. Residues Lys-41, Leu-73, and Arg-87 each contribute to the substrate site. Residues 88–90 (GLR), Glu-98, and 123–129 (FAFLSST) contribute to the ATP site.

The protein belongs to the bacterial CoaD family. As to quaternary structure, homohexamer. Mg(2+) is required as a cofactor.

It is found in the cytoplasm. The catalysed reaction is (R)-4'-phosphopantetheine + ATP + H(+) = 3'-dephospho-CoA + diphosphate. Its pathway is cofactor biosynthesis; coenzyme A biosynthesis; CoA from (R)-pantothenate: step 4/5. Its function is as follows. Reversibly transfers an adenylyl group from ATP to 4'-phosphopantetheine, yielding dephospho-CoA (dPCoA) and pyrophosphate. The protein is Phosphopantetheine adenylyltransferase of Vibrio atlanticus (strain LGP32) (Vibrio splendidus (strain Mel32)).